The chain runs to 107 residues: Phosphoribosyl-ATP pyrophosphatase (107 aa).

The protein belongs to the PRA-PH family.

It localises to the cytoplasm. It catalyses the reaction 1-(5-phospho-beta-D-ribosyl)-ATP + H2O = 1-(5-phospho-beta-D-ribosyl)-5'-AMP + diphosphate + H(+). It functions in the pathway amino-acid biosynthesis; L-histidine biosynthesis; L-histidine from 5-phospho-alpha-D-ribose 1-diphosphate: step 2/9. In Bacillus thuringiensis (strain Al Hakam), this protein is Phosphoribosyl-ATP pyrophosphatase.